A 563-amino-acid chain; its full sequence is Sulfite reductase [NADPH] hemoprotein beta-component (563 aa).

[4Fe-4S] cluster contacts are provided by C427, C433, C472, and C476. C476 lines the siroheme pocket.

The protein belongs to the nitrite and sulfite reductase 4Fe-4S domain family. Alpha(8)-beta(8). The alpha component is a flavoprotein, the beta component is a hemoprotein. It depends on siroheme as a cofactor. The cofactor is [4Fe-4S] cluster.

The catalysed reaction is hydrogen sulfide + 3 NADP(+) + 3 H2O = sulfite + 3 NADPH + 4 H(+). It functions in the pathway sulfur metabolism; hydrogen sulfide biosynthesis; hydrogen sulfide from sulfite (NADPH route): step 1/1. Functionally, component of the sulfite reductase complex that catalyzes the 6-electron reduction of sulfite to sulfide. This is one of several activities required for the biosynthesis of L-cysteine from sulfate. The polypeptide is Sulfite reductase [NADPH] hemoprotein beta-component (Acidithiobacillus ferrooxidans (strain ATCC 53993 / BNL-5-31) (Leptospirillum ferrooxidans (ATCC 53993))).